Here is a 143-residue protein sequence, read N- to C-terminus: Ribosome-binding factor A (143 aa).

Residues 117 to 143 (DAEIARRSQGAMPAGEADPYRHSDEEE) form a disordered region. Positions 134–143 (DPYRHSDEEE) are enriched in basic and acidic residues.

This sequence belongs to the RbfA family. Monomer. Binds 30S ribosomal subunits, but not 50S ribosomal subunits or 70S ribosomes.

It localises to the cytoplasm. Its function is as follows. One of several proteins that assist in the late maturation steps of the functional core of the 30S ribosomal subunit. Associates with free 30S ribosomal subunits (but not with 30S subunits that are part of 70S ribosomes or polysomes). Required for efficient processing of 16S rRNA. May interact with the 5'-terminal helix region of 16S rRNA. The polypeptide is Ribosome-binding factor A (Cutibacterium acnes (strain DSM 16379 / KPA171202) (Propionibacterium acnes)).